The primary structure comprises 377 residues: Homoserine O-succinyltransferase (377 aa).

One can recognise an AB hydrolase-1 domain in the interval 50 to 358 (NAILVCHALS…PSTYGHDSFL (309 aa)). Catalysis depends on serine 156, which acts as the Nucleophile. Arginine 226 contacts substrate. Active-site residues include aspartate 321 and histidine 354. A substrate-binding site is contributed by aspartate 355.

This sequence belongs to the AB hydrolase superfamily. MetX family. Homodimer.

The protein resides in the cytoplasm. It carries out the reaction L-homoserine + succinyl-CoA = O-succinyl-L-homoserine + CoA. Its pathway is amino-acid biosynthesis; L-methionine biosynthesis via de novo pathway; O-succinyl-L-homoserine from L-homoserine: step 1/1. Functionally, transfers a succinyl group from succinyl-CoA to L-homoserine, forming succinyl-L-homoserine. This Nitrosomonas eutropha (strain DSM 101675 / C91 / Nm57) protein is Homoserine O-succinyltransferase.